The primary structure comprises 68 residues: Bacteriocin lactococcin-B (68 aa).

Positions 1 to 21 are excised as a propeptide; that stretch reads MKNQLNFNIVSDEELAEVNGG.

Its subcellular location is the secreted. Its function is as follows. Kills Lactococci by dissipating the membrane potential of the cells. In Lactococcus lactis subsp. cremoris (Streptococcus cremoris), this protein is Bacteriocin lactococcin-B (lcnB).